Here is a 118-residue protein sequence, read N- to C-terminus: Holo-[acyl-carrier-protein] synthase (118 aa).

Aspartate 5 and glutamate 50 together coordinate Mg(2+).

The protein belongs to the P-Pant transferase superfamily. AcpS family. Requires Mg(2+) as cofactor.

It localises to the cytoplasm. It catalyses the reaction apo-[ACP] + CoA = holo-[ACP] + adenosine 3',5'-bisphosphate + H(+). Functionally, transfers the 4'-phosphopantetheine moiety from coenzyme A to a Ser of acyl-carrier-protein. The polypeptide is Holo-[acyl-carrier-protein] synthase (Wolinella succinogenes (strain ATCC 29543 / DSM 1740 / CCUG 13145 / JCM 31913 / LMG 7466 / NCTC 11488 / FDC 602W) (Vibrio succinogenes)).